The chain runs to 337 residues: Phosphate acyltransferase (337 aa).

This sequence belongs to the PlsX family. Homodimer. Probably interacts with PlsY.

It is found in the cytoplasm. The enzyme catalyses a fatty acyl-[ACP] + phosphate = an acyl phosphate + holo-[ACP]. The protein operates within lipid metabolism; phospholipid metabolism. Functionally, catalyzes the reversible formation of acyl-phosphate (acyl-PO(4)) from acyl-[acyl-carrier-protein] (acyl-ACP). This enzyme utilizes acyl-ACP as fatty acyl donor, but not acyl-CoA. The polypeptide is Phosphate acyltransferase (Ehrlichia canis (strain Jake)).